The primary structure comprises 428 residues: Serine--tRNA ligase (428 aa).

233–235 serves as a coordination point for L-serine; that stretch reads TAE. 264–266 serves as a coordination point for ATP; that stretch reads RRE. Glu287 serves as a coordination point for L-serine. Residue 351–354 coordinates ATP; the sequence is EVSS. Ser387 contributes to the L-serine binding site.

The protein belongs to the class-II aminoacyl-tRNA synthetase family. Type-1 seryl-tRNA synthetase subfamily. As to quaternary structure, homodimer. The tRNA molecule binds across the dimer.

The protein resides in the cytoplasm. The catalysed reaction is tRNA(Ser) + L-serine + ATP = L-seryl-tRNA(Ser) + AMP + diphosphate + H(+). It catalyses the reaction tRNA(Sec) + L-serine + ATP = L-seryl-tRNA(Sec) + AMP + diphosphate + H(+). The protein operates within aminoacyl-tRNA biosynthesis; selenocysteinyl-tRNA(Sec) biosynthesis; L-seryl-tRNA(Sec) from L-serine and tRNA(Sec): step 1/1. In terms of biological role, catalyzes the attachment of serine to tRNA(Ser). Is also able to aminoacylate tRNA(Sec) with serine, to form the misacylated tRNA L-seryl-tRNA(Sec), which will be further converted into selenocysteinyl-tRNA(Sec). The polypeptide is Serine--tRNA ligase (Salinibacter ruber (strain DSM 13855 / M31)).